A 98-amino-acid chain; its full sequence is NADH-ubiquinone oxidoreductase chain 4L (98 aa).

3 helical membrane-spanning segments follow: residues 1–21 (MTPT…GMLI), 26–46 (LMAS…MTAV), and 61–81 (IIML…LVSI).

The protein belongs to the complex I subunit 4L family. As to quaternary structure, core subunit of respiratory chain NADH dehydrogenase (Complex I) which is composed of 45 different subunits.

Its subcellular location is the mitochondrion inner membrane. It catalyses the reaction a ubiquinone + NADH + 5 H(+)(in) = a ubiquinol + NAD(+) + 4 H(+)(out). Its function is as follows. Core subunit of the mitochondrial membrane respiratory chain NADH dehydrogenase (Complex I) which catalyzes electron transfer from NADH through the respiratory chain, using ubiquinone as an electron acceptor. Part of the enzyme membrane arm which is embedded in the lipid bilayer and involved in proton translocation. The sequence is that of NADH-ubiquinone oxidoreductase chain 4L (MT-ND4L) from Papio hamadryas (Hamadryas baboon).